We begin with the raw amino-acid sequence, 77 residues long: uncharacterized protein (77 aa).

It localises to the plastid. The protein localises to the cyanelle. This is an uncharacterized protein from Cyanophora paradoxa.